The primary structure comprises 106 residues: Large ribosomal subunit protein uL24 (106 aa).

The protein belongs to the universal ribosomal protein uL24 family. In terms of assembly, part of the 50S ribosomal subunit.

Its function is as follows. One of two assembly initiator proteins, it binds directly to the 5'-end of the 23S rRNA, where it nucleates assembly of the 50S subunit. In terms of biological role, one of the proteins that surrounds the polypeptide exit tunnel on the outside of the subunit. This chain is Large ribosomal subunit protein uL24, found in Albidiferax ferrireducens (strain ATCC BAA-621 / DSM 15236 / T118) (Rhodoferax ferrireducens).